The chain runs to 563 residues: BOS complex subunit NCLN (563 aa).

The N-terminal stretch at 1 to 42 is a signal peptide; it reads MLEEAGEVLENVLKASCLPLGFIVFLPAVLLLVAPPLPAADA. Residues 43–522 are Lumenal-facing; it reads AHEFTVYRMQ…VMNAYRVKPA (480 aa). N-linked (GlcNAc...) asparagine glycans are attached at residues Asn241 and Asn428. Residues 523-543 traverse the membrane as a helical segment; the sequence is IFDLLLALCIGAYLGMAYTAV. Over 544-563 the chain is Cytoplasmic; the sequence is QHFHVLYKTVQRLLLKAKAQ.

The protein belongs to the nicastrin family. In terms of assembly, component of the back of Sec61 (BOS) complex, composed of NCLN/Nicalin, NOMO1 and TMEM147. The BOS complex is part of the multi-pass translocon (MPT) complex, composed of three subcomplexes, the GEL complex (composed of RAB5IF/OPTI and TMCO1), the BOS complex (composed of NCLN/Nicalin, NOMO1 and TMEM147) and the PAT complex (composed of WDR83OS/Asterix and CCDC47). The MPT complex associates with the SEC61 complex.

The protein localises to the endoplasmic reticulum membrane. In terms of biological role, component of the multi-pass translocon (MPT) complex that mediates insertion of multi-pass membrane proteins into the lipid bilayer of membranes. The MPT complex takes over after the SEC61 complex: following membrane insertion of the first few transmembrane segments of proteins by the SEC61 complex, the MPT complex occludes the lateral gate of the SEC61 complex to promote insertion of subsequent transmembrane regions. May antagonize Nodal signaling and subsequent organization of axial structures during mesodermal patterning, via its interaction with NOMO. The chain is BOS complex subunit NCLN (Ncln) from Mus musculus (Mouse).